The sequence spans 151 residues: Ribosomal RNA large subunit methyltransferase H (151 aa).

Residues leucine 73, glycine 100, and leucine 119 to leucine 124 contribute to the S-adenosyl-L-methionine site.

The protein belongs to the RNA methyltransferase RlmH family. In terms of assembly, homodimer.

It is found in the cytoplasm. The enzyme catalyses pseudouridine(1915) in 23S rRNA + S-adenosyl-L-methionine = N(3)-methylpseudouridine(1915) in 23S rRNA + S-adenosyl-L-homocysteine + H(+). In terms of biological role, specifically methylates the pseudouridine at position 1915 (m3Psi1915) in 23S rRNA. The chain is Ribosomal RNA large subunit methyltransferase H from Campylobacter lari (strain RM2100 / D67 / ATCC BAA-1060).